Here is a 254-residue protein sequence, read N- to C-terminus: Thiazole synthase (254 aa).

The active-site Schiff-base intermediate with DXP is the lysine 95. Residues glycine 156, 182–183 (AG), and 204–205 (NT) each bind 1-deoxy-D-xylulose 5-phosphate.

The protein belongs to the ThiG family. In terms of assembly, homotetramer. Forms heterodimers with either ThiH or ThiS.

It localises to the cytoplasm. The enzyme catalyses [ThiS sulfur-carrier protein]-C-terminal-Gly-aminoethanethioate + 2-iminoacetate + 1-deoxy-D-xylulose 5-phosphate = [ThiS sulfur-carrier protein]-C-terminal Gly-Gly + 2-[(2R,5Z)-2-carboxy-4-methylthiazol-5(2H)-ylidene]ethyl phosphate + 2 H2O + H(+). The protein operates within cofactor biosynthesis; thiamine diphosphate biosynthesis. Catalyzes the rearrangement of 1-deoxy-D-xylulose 5-phosphate (DXP) to produce the thiazole phosphate moiety of thiamine. Sulfur is provided by the thiocarboxylate moiety of the carrier protein ThiS. In vitro, sulfur can be provided by H(2)S. This chain is Thiazole synthase, found in Shewanella sediminis (strain HAW-EB3).